Reading from the N-terminus, the 293-residue chain is MSDTNYAVIYDLHSHTTASDGCLTPEALVHRAVEMRVGTLAITDHDTTAAIAPAREEISRSGLALNLIPGVEISTVWENHEIHIVGLNIDITHPLMCEFLAQQTERRNQRAQLIAERLEKAQIPGALEGAQRLAQGGAVTRGHFARFLVECGKASSMADVFKKYLARGKTGYVPPQWCTIEQAIDVIHHSGGKAVLAHPGRYNLSAKWLKRLVAHFAEHHGDAMEVAQCQQSPNERTQLAALARQHHLWASQGSDFHQPCPWIELGRKLWLPAGVEGVWQLWEQPQNTTEREL.

Residues histidine 13, histidine 15, aspartate 20, histidine 45, glutamate 72, histidine 83, histidine 198, aspartate 255, and histidine 257 each contribute to the Mn(2+) site.

Belongs to the PHP family. TrpH/YciV subfamily. Mn(2+) serves as cofactor.

The enzyme catalyses a ribonucleoside 3',5'-bisphosphate + H2O = a ribonucleoside 5'-phosphate + phosphate. Its function is as follows. Exoribonuclease that catalyzes the last steps of 5S, 16S and 23S rRNA 5'-end maturation. Removes 3 nucleotides (nt) from the 5' end of 5S, 16S and 23S rRNA precursors to generate the mature 5' ends. Precursors with longer extensions are not processed (7 nt at the 5' end of pre-23S rRNA or 66 nt at the 5'-end of 16S rRNA are not processed). 5S and 23S rRNA maturation occurs more efficiently and accurately on ribosomal particles as compared to free RNA; the enzyme overdigests free RNA but generates the correct 5'-end in ribosomes from rnm deletion strains. Efficiently catalyzes the hydrolysis of the 3'-phosphate from 3',5'-bis-phosphonucleotides as well as the successive hydrolysis of 5'-phosphomononucleotides from the 5'-end of short pieces of RNA and DNA, with no specificity toward the identity of the nucleotide base. Is more efficient at hydrolyzing RNA oligonucleotides than DNA oligonucleotides. This enzyme can also hydrolyze annealed DNA duplexes, albeit at a catalytic efficiency approximately 10-fold lower than that of the corresponding single-stranded oligonucleotides. This Escherichia coli (strain K12) protein is 5'-3' exoribonuclease Rnm.